Consider the following 530-residue polypeptide: UDP-glucuronosyltransferase 2B31 (530 aa).

The first 24 residues, 1–24, serve as a signal peptide directing secretion; sequence MSMKWISVLLGLQLSCYFSSGSCG. An N6-succinyllysine modification is found at Lys136. A glycan (N-linked (GlcNAc...) asparagine) is linked at Asn316. The helical transmembrane segment at 495–515 threads the bilayer; that stretch reads IGFLLACVATAIFVTTQCCLF.

It belongs to the UDP-glycosyltransferase family.

It is found in the microsome membrane. Its subcellular location is the endoplasmic reticulum membrane. It catalyses the reaction glucuronate acceptor + UDP-alpha-D-glucuronate = acceptor beta-D-glucuronoside + UDP + H(+). Functionally, UDPGTs are of major importance in the conjugation and subsequent elimination of potentially toxic xenobiotics and endogenous compounds. This isozyme has glucuronidating capacity on phenols, opioids, and carboxylic acid-containing drugs. The sequence is that of UDP-glucuronosyltransferase 2B31 (UGT2B31) from Canis lupus familiaris (Dog).